A 256-amino-acid chain; its full sequence is ATG8-interacting protein 1 (256 aa).

The AIM (Atg8-family-interacting motif) signature appears at 14–17 (WEVV). A helical transmembrane segment spans residues 181–200 (ANAIWSLFFAAAVTGLVVLG). An AIM (Atg8-family-interacting motif) motif is present at residues 208–211 (WQVL).

Interacts with ATG8F. Interacts with ATG8H. Interacts with APE1 and PSBS/NPQ4.

Its subcellular location is the endoplasmic reticulum membrane. The protein localises to the membrane. It localises to the plastid. It is found in the chloroplast membrane. Its function is as follows. Involved in a special stress-induced plastid-to-vacuole protein trafficking pathway. Interacts with ATG8F in plastid bodies to subsequently enable their delivery to the vacuole by an autophagic pathway. Interacts with the plastid proteins APE1 and PSBS/NPQ4 and may recruit them as cargo into plastid bodies that may be recognized by the autophagy machinery for degradation in the vacuole. Involved in the alleviation of damage caused by salt stress during plant development, probably through its involvement in plastid-to-vacuole and ER-to-vacuole trafficking. Plays a role in seed germination in response to exogenous abscisic acid (ABA) treatment. The protein is ATG8-interacting protein 1 of Arabidopsis thaliana (Mouse-ear cress).